A 351-amino-acid chain; its full sequence is Probable dual-specificity RNA methyltransferase RlmN (351 aa).

E98 serves as the catalytic Proton acceptor. In terms of domain architecture, Radical SAM core spans 104 to 332; the sequence is TQKRLTVCVS…ASIRRSRGLD (229 aa). A disulfide bond links C111 and C337. Residues C118, C122, and C125 each coordinate [4Fe-4S] cluster. S-adenosyl-L-methionine is bound by residues 165–166, S195, 218–220, and N294; these read GE and SLH. The S-methylcysteine intermediate role is filled by C337.

This sequence belongs to the radical SAM superfamily. RlmN family. [4Fe-4S] cluster is required as a cofactor.

The protein resides in the cytoplasm. It catalyses the reaction adenosine(2503) in 23S rRNA + 2 reduced [2Fe-2S]-[ferredoxin] + 2 S-adenosyl-L-methionine = 2-methyladenosine(2503) in 23S rRNA + 5'-deoxyadenosine + L-methionine + 2 oxidized [2Fe-2S]-[ferredoxin] + S-adenosyl-L-homocysteine. It carries out the reaction adenosine(37) in tRNA + 2 reduced [2Fe-2S]-[ferredoxin] + 2 S-adenosyl-L-methionine = 2-methyladenosine(37) in tRNA + 5'-deoxyadenosine + L-methionine + 2 oxidized [2Fe-2S]-[ferredoxin] + S-adenosyl-L-homocysteine. Its function is as follows. Specifically methylates position 2 of adenine 2503 in 23S rRNA and position 2 of adenine 37 in tRNAs. This Acaryochloris marina (strain MBIC 11017) protein is Probable dual-specificity RNA methyltransferase RlmN.